Here is a 382-residue protein sequence, read N- to C-terminus: S-adenosylmethionine synthase (382 aa).

An ATP-binding site is contributed by His-15. Position 17 (Asp-17) interacts with Mg(2+). A K(+)-binding site is contributed by Glu-43. Residues Glu-56 and Gln-99 each contribute to the L-methionine site. Residues 99 to 109 (QSGDIAQGVDR) are flexible loop. ATP contacts are provided by residues 164–166 (DAK), 230–231 (KF), Asp-239, 245–246 (RK), Ala-262, and Lys-266. Asp-239 contacts L-methionine. Residue Lys-270 coordinates L-methionine.

It belongs to the AdoMet synthase family. As to quaternary structure, homotetramer; dimer of dimers. It depends on Mg(2+) as a cofactor. K(+) serves as cofactor.

Its subcellular location is the cytoplasm. It carries out the reaction L-methionine + ATP + H2O = S-adenosyl-L-methionine + phosphate + diphosphate. The protein operates within amino-acid biosynthesis; S-adenosyl-L-methionine biosynthesis; S-adenosyl-L-methionine from L-methionine: step 1/1. Catalyzes the formation of S-adenosylmethionine (AdoMet) from methionine and ATP. The overall synthetic reaction is composed of two sequential steps, AdoMet formation and the subsequent tripolyphosphate hydrolysis which occurs prior to release of AdoMet from the enzyme. In Dichelobacter nodosus (strain VCS1703A), this protein is S-adenosylmethionine synthase.